A 295-amino-acid chain; its full sequence is uncharacterized protein (295 aa).

Belongs to the ROK (NagC/XylR) family.

This is an uncharacterized protein from Clostridium perfringens (strain 13 / Type A).